The sequence spans 462 residues: Glycine--tRNA ligase (462 aa).

Substrate is bound by residues R98 and E174. ATP-binding positions include 206 to 208 (RNE), 216 to 221 (FRTREF), 290 to 291 (EL), and 334 to 337 (GADR). 221-225 (FEQME) contacts substrate. 330-334 (EPSLG) serves as a coordination point for substrate.

It belongs to the class-II aminoacyl-tRNA synthetase family. Homodimer.

The protein resides in the cytoplasm. The enzyme catalyses tRNA(Gly) + glycine + ATP = glycyl-tRNA(Gly) + AMP + diphosphate. Its function is as follows. Catalyzes the attachment of glycine to tRNA(Gly). The protein is Glycine--tRNA ligase of Lachnospira eligens (strain ATCC 27750 / DSM 3376 / VPI C15-48 / C15-B4) (Eubacterium eligens).